The primary structure comprises 179 residues: Translation initiation factor IF-3 (179 aa).

This sequence belongs to the IF-3 family. As to quaternary structure, monomer.

The protein resides in the cytoplasm. IF-3 binds to the 30S ribosomal subunit and shifts the equilibrium between 70S ribosomes and their 50S and 30S subunits in favor of the free subunits, thus enhancing the availability of 30S subunits on which protein synthesis initiation begins. This is Translation initiation factor IF-3 from Proteus hauseri.